Consider the following 253-residue polypeptide: Tetraspanin-3 (253 aa).

Residues 1–11 are Cytoplasmic-facing; it reads MGQCGITSSKT. The chain crosses the membrane as a helical span at residues 12 to 32; it reads VLVFLNLIFWGAAGILCYVGA. Residues 33-50 are Extracellular-facing; sequence YVFITYDDYDHFFEDVYT. Residues 51–71 form a helical membrane-spanning segment; the sequence is LFPAVVIIAVGALLFIIGLIG. Residues 72 to 85 are Cytoplasmic-facing; the sequence is CCATIRESRCGLAT. The chain crosses the membrane as a helical span at residues 86–106; the sequence is FVFILLLVFVTEVVVVVLGYV. At 107 to 212 the chain is on the extracellular side; that stretch reads YRAKVENEVD…KKLQEILMHV (106 aa). Residues Asn-127, Asn-152, Asn-167, and Asn-183 are each glycosylated (N-linked (GlcNAc...) asparagine). Residues 213–233 form a helical membrane-spanning segment; that stretch reads IWAALAFAAIQLLGMLCACIV. Residues 234 to 253 are Cytoplasmic-facing; the sequence is LCRRSRDPAYELLITGGTYA.

This sequence belongs to the tetraspanin (TM4SF) family. In terms of assembly, interacts with claudin-11/CLDN11 and integrins.

The protein localises to the membrane. In terms of biological role, regulates the proliferation and migration of oligodendrocytes, a process essential for normal myelination and repair. The sequence is that of Tetraspanin-3 (Tspan3) from Mus musculus (Mouse).